The primary structure comprises 89 residues: Small ribosomal subunit protein uS15 (89 aa).

Positions 1–21 (MVMTAEDKAQVIGEHKKHDGD) are enriched in basic and acidic residues. A disordered region spans residues 1-24 (MVMTAEDKAQVIGEHKKHDGDTGS).

It belongs to the universal ribosomal protein uS15 family. In terms of assembly, part of the 30S ribosomal subunit. Forms a bridge to the 50S subunit in the 70S ribosome, contacting the 23S rRNA.

Its function is as follows. One of the primary rRNA binding proteins, it binds directly to 16S rRNA where it helps nucleate assembly of the platform of the 30S subunit by binding and bridging several RNA helices of the 16S rRNA. Functionally, forms an intersubunit bridge (bridge B4) with the 23S rRNA of the 50S subunit in the ribosome. The polypeptide is Small ribosomal subunit protein uS15 (Solidesulfovibrio magneticus (strain ATCC 700980 / DSM 13731 / RS-1) (Desulfovibrio magneticus)).